Reading from the N-terminus, the 141-residue chain is Sec-independent protein translocase protein TatB (141 aa).

A helical transmembrane segment spans residues 1 to 21 (MFGISFSELLLVGLVALLVLG). The tract at residues 74–141 (EAQKLLAPLT…SPPSETPRNP (68 aa)) is disordered. Pro residues predominate over residues 89 to 115 (QETPPPAAESPAPSVPTPPPTSTPAVP). Residues 116–129 (PADAAAPPAVAAST) are compositionally biased toward low complexity. The segment covering 130 to 141 (PPSPPSETPRNP) has biased composition (pro residues).

It belongs to the TatB family. As to quaternary structure, the Tat system comprises two distinct complexes: a TatABC complex, containing multiple copies of TatA, TatB and TatC subunits, and a separate TatA complex, containing only TatA subunits. Substrates initially bind to the TatABC complex, which probably triggers association of the separate TatA complex to form the active translocon.

The protein localises to the cell inner membrane. Its function is as follows. Part of the twin-arginine translocation (Tat) system that transports large folded proteins containing a characteristic twin-arginine motif in their signal peptide across membranes. Together with TatC, TatB is part of a receptor directly interacting with Tat signal peptides. TatB may form an oligomeric binding site that transiently accommodates folded Tat precursor proteins before their translocation. This Pseudomonas aeruginosa (strain ATCC 15692 / DSM 22644 / CIP 104116 / JCM 14847 / LMG 12228 / 1C / PRS 101 / PAO1) protein is Sec-independent protein translocase protein TatB.